The sequence spans 719 residues: Photosystem I P700 chlorophyll a apoprotein A1 (719 aa).

The next 8 helical transmembrane spans lie at 61-84 (VFSA…FHGA), 147-170 (LYCT…FHYH), 186-210 (LNHH…HVSL), 282-300 (TAHH…GHMY), 337-360 (WHAQ…HHMY), 376-402 (LSLF…IFMV), 424-446 (AIVS…LYIH), and 522-540 (FLVH…LILL). [4Fe-4S] cluster-binding residues include Cys564 and Cys573. 2 helical membrane-spanning segments follow: residues 580–601 (HVFL…HFSW) and 655–677 (LSAY…MFLF). His666 serves as a coordination point for chlorophyll a'. Positions 674 and 682 each coordinate chlorophyll a. Trp683 contributes to the phylloquinone binding site. Residues 715–719 (AVGVA) form a helical membrane-spanning segment.

The protein belongs to the PsaA/PsaB family. As to quaternary structure, the PsaA/B heterodimer binds the P700 chlorophyll special pair and subsequent electron acceptors. PSI consists of a core antenna complex that captures photons, and an electron transfer chain that converts photonic excitation into a charge separation. The eukaryotic PSI reaction center is composed of at least 11 subunits. Requires P700 is a chlorophyll a/chlorophyll a' dimer, A0 is one or more chlorophyll a, A1 is one or both phylloquinones and FX is a shared 4Fe-4S iron-sulfur center. as cofactor.

The protein localises to the plastid. It is found in the chloroplast thylakoid membrane. It catalyses the reaction reduced [plastocyanin] + hnu + oxidized [2Fe-2S]-[ferredoxin] = oxidized [plastocyanin] + reduced [2Fe-2S]-[ferredoxin]. Functionally, psaA and PsaB bind P700, the primary electron donor of photosystem I (PSI), as well as the electron acceptors A0, A1 and FX. PSI is a plastocyanin-ferredoxin oxidoreductase, converting photonic excitation into a charge separation, which transfers an electron from the donor P700 chlorophyll pair to the spectroscopically characterized acceptors A0, A1, FX, FA and FB in turn. Oxidized P700 is reduced on the lumenal side of the thylakoid membrane by plastocyanin. The protein is Photosystem I P700 chlorophyll a apoprotein A1 of Torreya californica (California nutmeg).